Consider the following 708-residue polypeptide: Metal-pseudopaline receptor CntO (708 aa).

A signal peptide spans 1-21; that stretch reads MRVSVSLVLGVGLGCSSPALW. In terms of domain architecture, TBDR plug spans 63–169; the sequence is RIEDIPQAIS…PGGTVNLVTK (107 aa). In terms of domain architecture, TBDR beta-barrel spans 174–708; the sequence is ERFARLHASA…NLTMSLTLNY (535 aa).

This sequence belongs to the TonB-dependent receptor family.

It localises to the cell outer membrane. Functionally, transports the metallophore pseudopaline, which is involved in the acquisition of nickel and zinc, and thus enables bacterial growth inside the host, where metal access is limited. Is probably involved in the import of pseudopaline-metal complexes. The sequence is that of Metal-pseudopaline receptor CntO from Pseudomonas aeruginosa (strain UCBPP-PA14).